The chain runs to 179 residues: ATP synthase subunit delta (179 aa).

The protein belongs to the ATPase delta chain family. F-type ATPases have 2 components, F(1) - the catalytic core - and F(0) - the membrane proton channel. F(1) has five subunits: alpha(3), beta(3), gamma(1), delta(1), epsilon(1). F(0) has three main subunits: a(1), b(2) and c(10-14). The alpha and beta chains form an alternating ring which encloses part of the gamma chain. F(1) is attached to F(0) by a central stalk formed by the gamma and epsilon chains, while a peripheral stalk is formed by the delta and b chains.

The protein localises to the cell membrane. In terms of biological role, f(1)F(0) ATP synthase produces ATP from ADP in the presence of a proton or sodium gradient. F-type ATPases consist of two structural domains, F(1) containing the extramembraneous catalytic core and F(0) containing the membrane proton channel, linked together by a central stalk and a peripheral stalk. During catalysis, ATP synthesis in the catalytic domain of F(1) is coupled via a rotary mechanism of the central stalk subunits to proton translocation. Functionally, this protein is part of the stalk that links CF(0) to CF(1). It either transmits conformational changes from CF(0) to CF(1) or is implicated in proton conduction. The protein is ATP synthase subunit delta of Clostridium botulinum (strain Langeland / NCTC 10281 / Type F).